Here is a 128-residue protein sequence, read N- to C-terminus: Glycine cleavage system H protein (128 aa).

One can recognise a Lipoyl-binding domain in the interval 22-104; it reads TVLVGITDYA…YGEGWIFRLK (83 aa). Position 63 is an N6-lipoyllysine (lysine 63).

The protein belongs to the GcvH family. The glycine cleavage system is composed of four proteins: P, T, L and H. Monomer. (R)-lipoate serves as cofactor.

The glycine cleavage system catalyzes the degradation of glycine. The H protein shuttles the methylamine group of glycine from the P protein to the T protein. The sequence is that of Glycine cleavage system H protein from Thermus thermophilus (strain ATCC 27634 / DSM 579 / HB8).